Reading from the N-terminus, the 89-residue chain is Small ribosomal subunit protein uS15 (89 aa).

It belongs to the universal ribosomal protein uS15 family. As to quaternary structure, part of the 30S ribosomal subunit. Forms a bridge to the 50S subunit in the 70S ribosome, contacting the 23S rRNA.

One of the primary rRNA binding proteins, it binds directly to 16S rRNA where it helps nucleate assembly of the platform of the 30S subunit by binding and bridging several RNA helices of the 16S rRNA. In terms of biological role, forms an intersubunit bridge (bridge B4) with the 23S rRNA of the 50S subunit in the ribosome. In Mycolicibacterium vanbaalenii (strain DSM 7251 / JCM 13017 / BCRC 16820 / KCTC 9966 / NRRL B-24157 / PYR-1) (Mycobacterium vanbaalenii), this protein is Small ribosomal subunit protein uS15.